Consider the following 747-residue polypeptide: AMP deaminase 1 (747 aa).

The residue at position 81 (T81) is a Phosphothreonine. Position 85 is a phosphoserine (S85). At Y216 the chain carries Phosphotyrosine. The Zn(2+) site is built by H303 and H305. Substrate-binding positions include H305 and 374–379; that span reads KFNDKY. The residue at position 441 (S441) is a Phosphoserine. A Zn(2+)-binding site is contributed by H572. E575 contributes to the substrate binding site. Residue H594 is the Proton acceptor of the active site. D649 serves as a coordination point for Zn(2+). Residue 650–653 coordinates substrate; sequence DPMQ.

This sequence belongs to the metallo-dependent hydrolases superfamily. Adenosine and AMP deaminases family. In terms of assembly, homotetramer. It depends on Zn(2+) as a cofactor.

It catalyses the reaction AMP + H2O + H(+) = IMP + NH4(+). The protein operates within purine metabolism; IMP biosynthesis via salvage pathway; IMP from AMP: step 1/1. In terms of biological role, AMP deaminase plays a critical role in energy metabolism. In Homo sapiens (Human), this protein is AMP deaminase 1.